A 935-amino-acid polypeptide reads, in one-letter code: Potassium channel AKT1 (935 aa).

At 1–106 the chain is on the cytoplasmic side; it reads MARWGAARMA…YDRRYRIWET (106 aa). Residues 107–127 traverse the membrane as a helical segment; the sequence is FLIVLVVYSAWVSPFEFGFIP. At 128 to 136 the chain is on the extracellular side; that stretch reads KPTGALATA. The helical transmembrane segment at 137 to 157 threads the bilayer; that stretch reads DNVVNAFFAVDIILTFFVAYL. The Cytoplasmic portion of the chain corresponds to 158–178; the sequence is DKMSYMLEDDPKKIAWRYSTT. A helical membrane pass occupies residues 179 to 199; sequence WLVLDVASTIPSEFARRILPS. Residues 200 to 205 are Extracellular-facing; sequence KLRSYG. The helical; Voltage-sensor transmembrane segment at 206 to 226 threads the bilayer; it reads FFNMLRLWRLRRVSSLFSRLE. Residues 227-240 are Cytoplasmic-facing; that stretch reads KDRHFNYFWVRCAK. Residues 241 to 261 form a helical membrane-spanning segment; that stretch reads LICVTLFAVHCAACFYYLLAD. At 262–288 the chain is on the extracellular side; that stretch reads RYPVPTSTWIGNYMADFHERSLWIRYV. An intramembrane region (pore-forming) is located at residues 289–308; it reads TSVYWSITTLTTVGYGDLHA. Residues 309–312 are Extracellular-facing; it reads ENTR. A helical membrane pass occupies residues 313 to 333; the sequence is EMIFNIFYMLFNLGLTAYLIG. Topologically, residues 334 to 935 are cytoplasmic; sequence NMTNLVVHGT…WDAEKMKGKS (602 aa). 419 to 538 is an a nucleoside 3',5'-cyclic phosphate binding site; sequence LFQGVSNDLI…TIIMNNLIQF (120 aa). ANK repeat units follow at residues 565–594, 598–627, 631–660, 662–691, 695–724, and 728–757; these read DLPI…DPNE, DGHT…DPNA, EGKV…DLSS, DTGL…DVNR, DGTT…DIDK, and NGWT…ATAS. Residues 826 to 854 form a disordered region; that stretch reads SQAQRETDHPLSRGGLAATGSPNPSSGSR. Polar residues predominate over residues 845-854; that stretch reads GSPNPSSGSR. Residues 859 to 935 enclose the KHA domain; that stretch reads RVTISCPEKG…WDAEKMKGKS (77 aa).

It belongs to the potassium channel family. Plant (TC 1.A.1.4) subfamily. As to quaternary structure, the potassium channel is probably a homo- or heterotetrameric complex of pore-forming subunits. Highly expressed in the epidermis and endodermis of roots, and at lower level in cells of the vasculature and the cortex. Expressed in xylem parenchyma, phloem and mesophyll cells of leaves.

Its subcellular location is the membrane. Highly selective inward-rectifying potassium channel that mediates potassium uptake by plant roots. The chain is Potassium channel AKT1 (AKT1) from Oryza sativa subsp. indica (Rice).